A 111-amino-acid polypeptide reads, in one-letter code: uncharacterized protein (111 aa).

3 helical membrane-spanning segments follow: residues 4-23 (LHQVLIACVIGGIMGILGHV), 39-61 (IYLGFLEDWFIGMTASILLVLSA), and 65-84 (SGIQLVILSIISGYGGEAVL).

It is found in the cell membrane. This is an uncharacterized protein from Bacillus subtilis (strain 168).